A 20-amino-acid polypeptide reads, in one-letter code: Large ribosomal subunit protein uL10 (20 aa).

The protein belongs to the universal ribosomal protein uL10 family. Part of the ribosomal stalk of the 50S ribosomal subunit. The N-terminus interacts with L11 and the large rRNA to form the base of the stalk. The C-terminus forms an elongated spine to which L12 dimers bind in a sequential fashion forming a multimeric L10(L12)X complex.

Forms part of the ribosomal stalk, playing a central role in the interaction of the ribosome with GTP-bound translation factors. This chain is Large ribosomal subunit protein uL10 (rplJ), found in Citrobacter freundii.